The sequence spans 412 residues: Transforming growth factor beta-2 proprotein (412 aa).

Residues 1-20 (MHCYLLSVFLTLDLAAVALS) form the signal peptide. Asparagine 72, asparagine 139, and asparagine 240 each carry an N-linked (GlcNAc...) asparagine glycan. Intrachain disulfides connect cysteine 307–cysteine 316, cysteine 315–cysteine 378, cysteine 344–cysteine 409, and cysteine 348–cysteine 411.

The protein belongs to the TGF-beta family. As to quaternary structure, interacts with Transforming growth factor beta-2 (TGF-beta-2) chain; interaction is non-covalent and maintains (TGF-beta-2) in a latent state. In terms of assembly, homodimer; disulfide-linked. Interacts with TGF-beta receptors (TGFBR1 and TGFBR2), leading to signal transduction. Post-translationally, the precursor proprotein is cleaved in the Golgi apparatus to form Transforming growth factor beta-2 (TGF-beta-2) and Latency-associated peptide (LAP) chains, which remain non-covalently linked, rendering TGF-beta-2 inactive.

Its subcellular location is the secreted. The protein localises to the extracellular space. It is found in the extracellular matrix. Its function is as follows. Precursor of the Latency-associated peptide (LAP) and Transforming growth factor beta-2 (TGF-beta-2) chains, which constitute the regulatory and active subunit of TGF-beta-2, respectively. Required to maintain the Transforming growth factor beta-2 (TGF-beta-2) chain in a latent state during storage in extracellular matrix. Associates non-covalently with TGF-beta-2 and regulates its activation via interaction with 'milieu molecules', such as LTBP1 and LRRC32/GARP, that control activation of TGF-beta-2. In terms of biological role, multifunctional protein that regulates various processes such as angiogenesis and heart development. Activation into mature form follows different steps: following cleavage of the proprotein in the Golgi apparatus, Latency-associated peptide (LAP) and Transforming growth factor beta-2 (TGF-beta-2) chains remain non-covalently linked rendering TGF-beta-2 inactive during storage in extracellular matrix. At the same time, LAP chain interacts with 'milieu molecules', such as LTBP1 and LRRC32/GARP, that control activation of TGF-beta-2 and maintain it in a latent state during storage in extracellular milieus. Once activated following release of LAP, TGF-beta-2 acts by binding to TGF-beta receptors (TGFBR1 and TGFBR2), which transduce signal. This Gallus gallus (Chicken) protein is Transforming growth factor beta-2 proprotein (TGFB2).